The following is an 82-amino-acid chain: Small ribosomal subunit protein bS20 (82 aa).

Positions Met-1–Arg-29 are disordered. A compositionally biased stretch (low complexity) spans Ala-16–Arg-29.

It belongs to the bacterial ribosomal protein bS20 family.

Binds directly to 16S ribosomal RNA. This is Small ribosomal subunit protein bS20 from Gemmatimonas aurantiaca (strain DSM 14586 / JCM 11422 / NBRC 100505 / T-27).